The chain runs to 198 residues: MICOS complex subunit MIC26 (198 aa).

The N-terminal stretch at 1–25 (MFKVIQRSVGPASLSLLTFKVYAAP) is a signal peptide. A helical transmembrane segment spans residues 108–128 (PGFFPRLGVIGFAGLIGLLLA). A glycan (O-linked (Xyl...) (chondroitin sulfate) serine) is linked at Ser162.

The protein belongs to the apolipoprotein O/MICOS complex subunit Mic27 family. In terms of assembly, component of the mitochondrial contact site and cristae organizing system (MICOS) complex, composed of at least MICOS10/MIC10, CHCHD3/MIC19, CHCHD6/MIC25, APOOL/MIC27, IMMT/MIC60, APOO/MIC23/MIC26 and MICOS13/MIC13. This complex was also known under the names MINOS or MitOS complex. he MICOS complex associates with mitochondrial outer membrane proteins SAMM50, MTX1 and MTX2 (together described as components of the mitochondrial outer membrane sorting assembly machinery (SAM) complex) and DNAJC11, mitochondrial inner membrane protein TMEM11 and with HSPA9. The MICOS and SAM complexes together with DNAJC11 are part of a large protein complex spanning both membranes termed the mitochondrial intermembrane space bridging (MIB) complex. Interacts with IMMT/MIC60. Interacts with MICOS10/MIC10 and APOOL/MIC27. O-glycosylation; glycosaminoglycan of chondroitin-sulfate type. As to expression, expressed in all tissues examined. Up-regulated in diabetic heart.

The protein localises to the mitochondrion inner membrane. It is found in the secreted. Its subcellular location is the mitochondrion. It localises to the golgi apparatus membrane. The protein resides in the endoplasmic reticulum membrane. Component of the MICOS complex, a large protein complex of the mitochondrial inner membrane that plays crucial roles in the maintenance of crista junctions, inner membrane architecture, and formation of contact sites to the outer membrane. Plays a crucial role in crista junction formation and mitochondrial function. Can promote cardiac lipotoxicity by enhancing mitochondrial respiration and fatty acid metabolism in cardiac myoblasts. Promotes cholesterol efflux from macrophage cells. Detected in HDL, LDL and VLDL. Secreted by a microsomal triglyceride transfer protein (MTTP)-dependent mechanism, probably as a VLDL-associated protein that is subsequently transferred to HDL. The chain is MICOS complex subunit MIC26 (APOO) from Homo sapiens (Human).